A 129-amino-acid polypeptide reads, in one-letter code: Lysozyme C (129 aa).

Residues lysine 1–leucine 129 form the C-type lysozyme domain. 4 disulfide bridges follow: cysteine 6–cysteine 127, cysteine 30–cysteine 115, cysteine 64–cysteine 80, and cysteine 76–cysteine 94. Residues glutamate 35 and aspartate 52 contribute to the active site.

It belongs to the glycosyl hydrolase 22 family. Monomer.

It localises to the secreted. The enzyme catalyses Hydrolysis of (1-&gt;4)-beta-linkages between N-acetylmuramic acid and N-acetyl-D-glucosamine residues in a peptidoglycan and between N-acetyl-D-glucosamine residues in chitodextrins.. Its function is as follows. Lysozymes have primarily a bacteriolytic function; those in tissues and body fluids are associated with the monocyte-macrophage system and enhance the activity of immunoagents. The polypeptide is Lysozyme C (LYZ) (Syrmaticus soemmerringii (Copper pheasant)).